Reading from the N-terminus, the 320-residue chain is Tryptophan--tRNA ligase (320 aa).

Residues 8-10 (QPT) and 16-17 (GN) each bind ATP. The 'HIGH' region signature appears at 9 to 17 (PTGRPHWGN). Residue Asp131 participates in L-tryptophan binding. Residues 143-145 (GVD), Val182, and 189-193 (KMSKS) each bind ATP. The short motif at 189-193 (KMSKS) is the 'KMSKS' region element.

It belongs to the class-I aminoacyl-tRNA synthetase family. In terms of assembly, homodimer.

It localises to the cytoplasm. The enzyme catalyses tRNA(Trp) + L-tryptophan + ATP = L-tryptophyl-tRNA(Trp) + AMP + diphosphate + H(+). Its function is as follows. Catalyzes the attachment of tryptophan to tRNA(Trp). The protein is Tryptophan--tRNA ligase of Rhodopirellula baltica (strain DSM 10527 / NCIMB 13988 / SH1).